The primary structure comprises 325 residues: Acetyl-coenzyme A carboxylase carboxyl transferase subunit alpha (325 aa).

The CoA carboxyltransferase C-terminal domain maps to Glu-35 to Gln-292.

Belongs to the AccA family. Acetyl-CoA carboxylase is a heterohexamer composed of biotin carboxyl carrier protein (AccB), biotin carboxylase (AccC) and two subunits each of ACCase subunit alpha (AccA) and ACCase subunit beta (AccD).

It localises to the cytoplasm. The enzyme catalyses N(6)-carboxybiotinyl-L-lysyl-[protein] + acetyl-CoA = N(6)-biotinyl-L-lysyl-[protein] + malonyl-CoA. It functions in the pathway lipid metabolism; malonyl-CoA biosynthesis; malonyl-CoA from acetyl-CoA: step 1/1. Component of the acetyl coenzyme A carboxylase (ACC) complex. First, biotin carboxylase catalyzes the carboxylation of biotin on its carrier protein (BCCP) and then the CO(2) group is transferred by the carboxyltransferase to acetyl-CoA to form malonyl-CoA. The protein is Acetyl-coenzyme A carboxylase carboxyl transferase subunit alpha of Geobacillus thermodenitrificans (strain NG80-2).